Here is a 235-residue protein sequence, read N- to C-terminus: N-alpha-acetyltransferase 10 (235 aa).

N-acetylmethionine is present on methionine 1. An interaction with NAA15 region spans residues 1–58 (MNIRNARPEDLMNMQHCNLLCLPENYQMKYYFYHGLSWPQLSYIAEDENGKIVGYVLA). Residues 1 to 152 (MNIRNARPED…DAYAMKRDLT (152 aa)) enclose the N-acetyltransferase domain. Lysine 136 bears the N6-acetyllysine; by autocatalysis mark. Basic and acidic residues predominate over residues 196 to 213 (EEKGLAAEDSGGDSKDLS). Residues 196–235 (EEKGLAAEDSGGDSKDLSEVSETTESTDVKDSSEASDSAS) form a disordered region. Serine 205 carries the phosphoserine modification. Serine 209 is modified (phosphoserine; by IKKB). 2 positions are modified to phosphoserine: serine 213 and serine 216.

Belongs to the acetyltransferase family. ARD1 subfamily. Component of the N-terminal acetyltransferase A complex (also called the NatA complex) composed of NAA10 and NAA15. Interacts with NAA15. Component of the N-terminal acetyltransferase A (NatA)/HYPK complex at least composed of NAA10, NAA15 and HYPK, which has N-terminal acetyltransferase activity. In complex with NAA15, interacts with HYPK. Component of the N-terminal acetyltransferase E (NatE) complex at least composed of NAA10, NAA15 and NAA50. Within the complex interacts with NAA15; the interaction is required for binding to NAAT50. Interacts with NAAT50. The interaction of the NatA complex with NAA50 reduces the acetylation activity of the NatA complex. Component of the N-terminal acetyltransferase E (NatE)/HYPK complex at least composed of NAA10, NAA15, NAA50 and HYPK. In complex with NAA15, interacts with HYPK; the interaction with HYPK reduces the capacity of the NatA complex to interact with NAA50. Interacts with HIF1A (via its ODD domain); the interaction increases HIF1A protein stability during normoxia, an down-regulates it when induced by hypoxia. Interacts with the ribosome. Binds to MYLK. Interacts with NAA16. Interacts (via its C-terminal domain) with TSC2, leading to its acetylation. Interacts with IKBKB. Interacts with HSPA1A and HSPA1B leading to its acetylation. Cleaved by caspases during apoptosis. In terms of processing, phosphorylation by IKBKB/IKKB at Ser-209 destabilises NAA10 and promotes its proteasome-mediated degradation. Post-translationally, autoacetylated at Lys-136 which stimulates its catalytic activity. As to expression, ubiquitous.

Its subcellular location is the cytoplasm. It is found in the nucleus. It catalyses the reaction N-terminal glycyl-[protein] + acetyl-CoA = N-terminal N(alpha)-acetylglycyl-[protein] + CoA + H(+). It carries out the reaction N-terminal L-alanyl-[protein] + acetyl-CoA = N-terminal N(alpha)-acetyl-L-alanyl-[protein] + CoA + H(+). The catalysed reaction is N-terminal L-seryl-[protein] + acetyl-CoA = N-terminal N(alpha)-acetyl-L-seryl-[protein] + CoA + H(+). The enzyme catalyses N-terminal L-valyl-[protein] + acetyl-CoA = N-terminal N(alpha)-acetyl-L-valyl-[protein] + CoA + H(+). It catalyses the reaction N-terminal L-cysteinyl-[protein] + acetyl-CoA = N-terminal N(alpha)-acetyl-L-cysteinyl-[protein] + CoA + H(+). It carries out the reaction N-terminal L-threonyl-[protein] + acetyl-CoA = N-terminal N(alpha)-acetyl-L-threonyl-[protein] + CoA + H(+). In terms of biological role, catalytic subunit of the N-terminal acetyltransferase A (NatA) complex which displays alpha (N-terminal) acetyltransferase activity. Acetylates amino termini that are devoid of initiator methionine. The alpha (N-terminal) acetyltransferase activity may be important for vascular, hematopoietic and neuronal growth and development. Without NAA15, displays epsilon (internal) acetyltransferase activity towards HIF1A, thereby promoting its degradation. Represses MYLK kinase activity by acetylation, and thus represses tumor cell migration. Acetylates, and stabilizes TSC2, thereby repressing mTOR activity and suppressing cancer development. Acetylates HSPA1A and HSPA1B at 'Lys-77' which enhances its chaperone activity and leads to preferential binding to co-chaperone HOPX. Acetylates HIST1H4A. Acts as a negative regulator of sister chromatid cohesion during mitosis. This Mus musculus (Mouse) protein is N-alpha-acetyltransferase 10 (Naa10).